The sequence spans 293 residues: Forkhead box protein N5 (293 aa).

A disordered region spans residues 104 to 152; the sequence is TSPPLQLQRQLSNDYSTVEDSEDEAPTSCSDVLTDDDDSYNPWQPKHKR. Polar residues predominate over residues 106-119; it reads PPLQLQRQLSNDYS. The fork-head DNA-binding region spans 176–273; the sequence is RPPLNYCNLI…NEMHALSDDL (98 aa).

The protein resides in the nucleus. This Xenopus tropicalis (Western clawed frog) protein is Forkhead box protein N5.